We begin with the raw amino-acid sequence, 318 residues long: Protein FAM228A (318 aa).

The interval 259-297 is disordered; sequence SQESKRHEKKGLALGTGQHRPRSWAAGEGQQRRRSQPVD.

Belongs to the FAM228 family.

This Bos taurus (Bovine) protein is Protein FAM228A (FAM228A).